We begin with the raw amino-acid sequence, 81 residues long: ATP synthase subunit c (81 aa).

2 helical membrane passes run 3–23 and 57–77; these read PLIAAASVVAAALAVGLGAIG and LAFMEALTIYGLVVSLVLLFA.

Belongs to the ATPase C chain family. F-type ATPases have 2 components, F(1) - the catalytic core - and F(0) - the membrane proton channel. F(1) has five subunits: alpha(3), beta(3), gamma(1), delta(1), epsilon(1). F(0) has four main subunits: a(1), b(1), b'(1) and c(10-14). The alpha and beta chains form an alternating ring which encloses part of the gamma chain. F(1) is attached to F(0) by a central stalk formed by the gamma and epsilon chains, while a peripheral stalk is formed by the delta, b and b' chains.

The protein localises to the cellular thylakoid membrane. Its function is as follows. F(1)F(0) ATP synthase produces ATP from ADP in the presence of a proton or sodium gradient. F-type ATPases consist of two structural domains, F(1) containing the extramembraneous catalytic core and F(0) containing the membrane proton channel, linked together by a central stalk and a peripheral stalk. During catalysis, ATP synthesis in the catalytic domain of F(1) is coupled via a rotary mechanism of the central stalk subunits to proton translocation. Functionally, key component of the F(0) channel; it plays a direct role in translocation across the membrane. A homomeric c-ring of between 10-14 subunits forms the central stalk rotor element with the F(1) delta and epsilon subunits. The sequence is that of ATP synthase subunit c from Trichodesmium erythraeum (strain IMS101).